The following is a 225-amino-acid chain: UPF0758 protein Ping_0056 (225 aa).

The MPN domain maps to 103 to 225 (ALTSAAQTKA…CTSFAENGWI (123 aa)). Zn(2+)-binding residues include histidine 174, histidine 176, and aspartate 187. The JAMM motif motif lies at 174–187 (HNHPSGDPSASEAD).

The protein belongs to the UPF0758 family.

This chain is UPF0758 protein Ping_0056, found in Psychromonas ingrahamii (strain DSM 17664 / CCUG 51855 / 37).